A 499-amino-acid chain; its full sequence is Glutamyl-tRNA(Gln) amidotransferase subunit A (499 aa).

Active-site charge relay system residues include Lys80 and Ser155. Ser179 functions as the Acyl-ester intermediate in the catalytic mechanism.

Belongs to the amidase family. GatA subfamily. As to quaternary structure, heterotrimer of A, B and C subunits.

The catalysed reaction is L-glutamyl-tRNA(Gln) + L-glutamine + ATP + H2O = L-glutaminyl-tRNA(Gln) + L-glutamate + ADP + phosphate + H(+). Functionally, allows the formation of correctly charged Gln-tRNA(Gln) through the transamidation of misacylated Glu-tRNA(Gln) in organisms which lack glutaminyl-tRNA synthetase. The reaction takes place in the presence of glutamine and ATP through an activated gamma-phospho-Glu-tRNA(Gln). This chain is Glutamyl-tRNA(Gln) amidotransferase subunit A, found in Cupriavidus metallidurans (strain ATCC 43123 / DSM 2839 / NBRC 102507 / CH34) (Ralstonia metallidurans).